A 364-amino-acid polypeptide reads, in one-letter code: Histidinol-phosphate aminotransferase (364 aa).

Lys-222 is modified (N6-(pyridoxal phosphate)lysine).

It belongs to the class-II pyridoxal-phosphate-dependent aminotransferase family. Histidinol-phosphate aminotransferase subfamily. In terms of assembly, homodimer. The cofactor is pyridoxal 5'-phosphate.

It catalyses the reaction L-histidinol phosphate + 2-oxoglutarate = 3-(imidazol-4-yl)-2-oxopropyl phosphate + L-glutamate. It functions in the pathway amino-acid biosynthesis; L-histidine biosynthesis; L-histidine from 5-phospho-alpha-D-ribose 1-diphosphate: step 7/9. This chain is Histidinol-phosphate aminotransferase, found in Brevibacillus brevis (strain 47 / JCM 6285 / NBRC 100599).